A 520-amino-acid polypeptide reads, in one-letter code: Glucose-1-phosphate adenylyltransferase small subunit, chloroplastic (520 aa).

The transit peptide at 1-71 (MATMAAIGSL…RTPSIVSPKA (71 aa)) directs the protein to the chloroplast. Positions 1-81 (MATMAAIGSL…VSDSQNSQTC (81 aa)) are disordered. A compositionally biased stretch (low complexity) spans 14-27 (SSSSNHTRRLSSSS). Over residues 28–51 (QRKTLSFSSSSLTGEKLNPTQEII) the composition is skewed to polar residues.

Belongs to the bacterial/plant glucose-1-phosphate adenylyltransferase family. In terms of assembly, heterotetramer. In terms of tissue distribution, leaves.

The protein resides in the plastid. The protein localises to the chloroplast. The catalysed reaction is alpha-D-glucose 1-phosphate + ATP + H(+) = ADP-alpha-D-glucose + diphosphate. Its pathway is glycan biosynthesis; starch biosynthesis. Its activity is regulated as follows. Activated by 3'phosphoglycerate, inhibited by orthophosphate. Allosteric regulation. Functionally, this protein plays a role in synthesis of starch. It catalyzes the synthesis of the activated glycosyl donor, ADP-glucose from Glc-1-P and ATP. In Brassica napus (Rape), this protein is Glucose-1-phosphate adenylyltransferase small subunit, chloroplastic (AGPS1).